The sequence spans 343 residues: MRVADFSFDLPDELIARFPKQDRTSSRLLSLDGPSGVVEHKVFSDLLELVNENDLLVFNNTRVIPARMFGQKASGGKVEVLVERVLDEHRVLAHVRASKSLKPGNEVILEGKAKATMVARHDTLFELEFEHSQNVLDILNDIGHMPLPPYIDRPDNEADRERYQTVYGEKPGAVAAPTAGLHFDDKLMTALKNKGVQMAFVTLHVGAGTFQPVRVATVDEHIMHSEYIEVPDDVVAAVANTKANGGRVIAIGTTSVRSLESAAKVHGGKLDTYFGDTDIFIYPGYQFNVVDAMITNFHLPESTLIMLVSAFAGQNNIMGAYNTAIEQQYRFFSYGDAMFLTRK.

This sequence belongs to the QueA family. Monomer.

The protein localises to the cytoplasm. It carries out the reaction 7-aminomethyl-7-carbaguanosine(34) in tRNA + S-adenosyl-L-methionine = epoxyqueuosine(34) in tRNA + adenine + L-methionine + 2 H(+). The protein operates within tRNA modification; tRNA-queuosine biosynthesis. Its function is as follows. Transfers and isomerizes the ribose moiety from AdoMet to the 7-aminomethyl group of 7-deazaguanine (preQ1-tRNA) to give epoxyqueuosine (oQ-tRNA). This chain is S-adenosylmethionine:tRNA ribosyltransferase-isomerase, found in Pseudoalteromonas translucida (strain TAC 125).